The sequence spans 109 residues: U4-lycotoxin-Ls1b (109 aa).

Residues 1-22 (MKVLVLFSVLFLTLFSYSSTEA) form the signal peptide. Positions 23 to 44 (IDEFDSDAEDDMLSLMANEQVR) are excised as a propeptide. The segment at 45–88 (AKACTPRLHDCSHDRHSCCRGELSKDVCYCFYPEGEDKTEVCSC) is knottin domain. Disulfide bonds link Cys-48–Cys-63, Cys-55–Cys-72, Cys-62–Cys-88, and Cys-74–Cys-86. A linear cationic cytotoxin domain region spans residues 89 to 108 (QQPKSHKYIEKVVDKAKTVV).

The protein belongs to the neurotoxin 19 (CSTX) family. 05 (U4-Lctx) subfamily. In terms of tissue distribution, expressed by the venom gland.

Its subcellular location is the secreted. Enhances the high-affinity desensitization of human P2RX3 purinoceptors. The polypeptide is U4-lycotoxin-Ls1b (Lycosa singoriensis (Wolf spider)).